Consider the following 141-residue polypeptide: Hemoglobin subunit alpha-A (141 aa).

Positions 1–141 (VLSAADKTNV…VGTVLTAKYR (141 aa)) constitute a Globin domain. His-58 contacts O2. Residue His-87 coordinates heme b.

The protein belongs to the globin family. In terms of assembly, heterotetramer of two alpha chains and two beta chains. In terms of tissue distribution, red blood cells.

Functionally, involved in oxygen transport from the lung to the various peripheral tissues. The polypeptide is Hemoglobin subunit alpha-A (HBAA) (Turdus merula (Common blackbird)).